Consider the following 342-residue polypeptide: Anthranilate phosphoribosyltransferase (342 aa).

5-phospho-alpha-D-ribose 1-diphosphate-binding positions include G83, 86 to 87 (GD), T91, 93 to 96 (NIST), 111 to 119 (KHGGRSVSS), and S123. Anthranilate is bound at residue G83. S95 lines the Mg(2+) pocket. Position 169 (R169) interacts with anthranilate. Mg(2+) contacts are provided by D228 and E229.

Belongs to the anthranilate phosphoribosyltransferase family. Homodimer. It depends on Mg(2+) as a cofactor.

It catalyses the reaction N-(5-phospho-beta-D-ribosyl)anthranilate + diphosphate = 5-phospho-alpha-D-ribose 1-diphosphate + anthranilate. It functions in the pathway amino-acid biosynthesis; L-tryptophan biosynthesis; L-tryptophan from chorismate: step 2/5. Functionally, catalyzes the transfer of the phosphoribosyl group of 5-phosphorylribose-1-pyrophosphate (PRPP) to anthranilate to yield N-(5'-phosphoribosyl)-anthranilate (PRA). This is Anthranilate phosphoribosyltransferase from Laribacter hongkongensis (strain HLHK9).